A 448-amino-acid chain; its full sequence is O-Mevalon transferase yanI (448 aa).

N-linked (GlcNAc...) asparagine glycosylation is present at Asn2. A run of 8 helical transmembrane segments spans residues 21–41, 54–74, 79–96, 165–185, 217–237, 316–336, 350–370, and 390–410; these read VLLSHSLASTHYTVLAFLLAV, YGLLLLQITCALQAFVAPPPP, AVLYTSGVLMANLLARYF, FVTAQLLTIIAMYAGLYLVEV, LIVLGLALVVYSHFALFVLPL, MLMLITFVISGLIHTSGSYHV, VKYFISQAISIMIEDFGCWLL, and IVTAGWYFWSRVHWSVMPVAL.

It belongs to the wax synthase family.

The protein localises to the membrane. It participates in secondary metabolite biosynthesis; terpenoid biosynthesis. O-Mevalon transferase yanI; part of the gene cluster that mediates the biosynthesis of yanuthone D, a fungal isoprenoid epoxycyclohexenone that acts as an antibiotic against fungi and bacteria. The first step of the pathway is the synthesis of 6-methylsalicylic acid (6-MSA) by the polyketide synthase yanA. 6-MSA is then converted to m-cresol by the decarboxylase yanB. The cytochrome P450 monooxygenase yanC then catalyzes the oxidation of m-cresol to toluquinol. Epoxidation of toluquinol is then performed by the short chain dehydrogenase yanD, with the help of yanE, and a further prenylation by yanG leads to 7-deacetoxyyanuthone A. The next step is the hydroxylation of C-22 of 7-deacetoxyyanuthone A by the cytochrome P450 monooxygenase yanH to yield 22-deacetylyanuthone A. O-Mevalon transferase yanI then attaches mevalon to the hydroxyl group of 22-deacetylyanuthone A to produce yanuthone E. Finally, the FAD-dependent monooxygenase yanF oxidizes the hydroxyl group at C15 of yanuthone E to form yanuthone D. Furthermore, several branching points in the pathway lead to the production of yanuthones F and G from 7-deacetoxyyanuthone A; yanuthones H and I from 22-deacetylyanuthone A; and yanuthone J from yanuthone E. This chain is O-Mevalon transferase yanI, found in Aspergillus niger (strain ATCC 1015 / CBS 113.46 / FGSC A1144 / LSHB Ac4 / NCTC 3858a / NRRL 328 / USDA 3528.7).